The following is a 482-amino-acid chain: Adenylyltransferase and sulfurtransferase MOCS3-2 (482 aa).

Residues Gly125, Asp146, 153–157, Lys170, and 214–215 each bind ATP; these read NNLHR and DN. Residues Cys255 and Cys258 each contribute to the Zn(2+) site. Cys272 functions as the Glycyl thioester intermediate; for adenylyltransferase activity in the catalytic mechanism. Cys330 and Cys333 together coordinate Zn(2+). The Rhodanese domain maps to 385-480; sequence DGEPHLLLDV…WGQDVDPDFP (96 aa). Catalysis depends on Cys440, which acts as the Cysteine persulfide intermediate; for sulfurtransferase activity.

This sequence in the N-terminal section; belongs to the HesA/MoeB/ThiF family. UBA4 subfamily. The cofactor is Zn(2+).

Its subcellular location is the cytoplasm. It catalyses the reaction [molybdopterin-synthase sulfur-carrier protein]-C-terminal Gly-Gly + ATP + H(+) = [molybdopterin-synthase sulfur-carrier protein]-C-terminal Gly-Gly-AMP + diphosphate. The catalysed reaction is [molybdopterin-synthase sulfur-carrier protein]-C-terminal Gly-Gly-AMP + S-sulfanyl-L-cysteinyl-[cysteine desulfurase] + AH2 = [molybdopterin-synthase sulfur-carrier protein]-C-terminal-Gly-aminoethanethioate + L-cysteinyl-[cysteine desulfurase] + A + AMP + 2 H(+). It participates in tRNA modification; 5-methoxycarbonylmethyl-2-thiouridine-tRNA biosynthesis. It functions in the pathway cofactor biosynthesis; molybdopterin biosynthesis. Functionally, plays a central role in 2-thiolation of mcm(5)S(2)U at tRNA wobble positions of cytosolic tRNA(Lys), tRNA(Glu) and tRNA(Gln). Also essential during biosynthesis of the molybdenum cofactor. Acts by mediating the C-terminal thiocarboxylation of sulfur carriers URM1 and MOCS2A. Its N-terminus first activates URM1 and MOCS2A as acyl-adenylates (-COAMP), then the persulfide sulfur on the catalytic cysteine is transferred to URM1 and MOCS2A to form thiocarboxylation (-COSH) of their C-terminus. The reaction probably involves hydrogen sulfide that is generated from the persulfide intermediate and that acts as a nucleophile towards URM1 and MOCS2A. Subsequently, a transient disulfide bond is formed. Does not use thiosulfate as sulfur donor; NFS1 probably acting as a sulfur donor for thiocarboxylation reactions. This is Adenylyltransferase and sulfurtransferase MOCS3-2 from Zea mays (Maize).